A 124-amino-acid polypeptide reads, in one-letter code: Small ribosomal subunit protein uS12 (124 aa).

Positions 11-20 (GRKRLKKKSK) are enriched in basic residues. The interval 11 to 30 (GRKRLKKKSKSPALENNPQK) is disordered. Asp89 is modified (3-methylthioaspartic acid). The interval 105–124 (EGVANRRQSRSRYGAKKPKK) is disordered. Residues 111–124 (RQSRSRYGAKKPKK) show a composition bias toward basic residues.

Belongs to the universal ribosomal protein uS12 family. As to quaternary structure, part of the 30S ribosomal subunit. Contacts proteins S8 and S17. May interact with IF1 in the 30S initiation complex.

With S4 and S5 plays an important role in translational accuracy. In terms of biological role, interacts with and stabilizes bases of the 16S rRNA that are involved in tRNA selection in the A site and with the mRNA backbone. Located at the interface of the 30S and 50S subunits, it traverses the body of the 30S subunit contacting proteins on the other side and probably holding the rRNA structure together. The combined cluster of proteins S8, S12 and S17 appears to hold together the shoulder and platform of the 30S subunit. In Kosmotoga olearia (strain ATCC BAA-1733 / DSM 21960 / TBF 19.5.1), this protein is Small ribosomal subunit protein uS12.